The primary structure comprises 430 residues: MKTTIKQAKDHLNQDVTIGAWLTNKRSSGKIAFLQLRDGTGFMQGVVVKSEVDEEVFKLAKEITQESSLYVTGTITEDNRSDLGYEMQVKSIEVISEAHDYPITPKNHGTEFLMDHRHLWLRSKKQHAVMKIRNEVIRATYEFFNKDGFTKVDPPILTASAPEGTSELFHTKYFDQDAFLSQSGQLYLEAAAMAHGKVFSFGPTFRAEKSKTRRHLIEFWMIEGEMAFTNHAESLEIQEQYVTHVVKSVLENCKLELKILERDTSKLEKVATPFPRISYDDAIEFLKSEGFDDIEWGEDFGAPHETAIANHYDLPVFITNYPTKIKPFYMQPNPENEETVLCADLIAPEGYGEIIGGSERVDDLELLEQRVKEHGLDEEAYSYYLDLRRYGSVPHCGFGLGLERTVAWISGVEHVRETAPFPRLLNRLYP.

It belongs to the class-II aminoacyl-tRNA synthetase family. In terms of assembly, homodimer.

The protein localises to the cytoplasm. The catalysed reaction is tRNA(Asn) + L-asparagine + ATP = L-asparaginyl-tRNA(Asn) + AMP + diphosphate + H(+). The polypeptide is Asparagine--tRNA ligase (Staphylococcus aureus (strain MW2)).